The following is a 384-amino-acid chain: Dual-specificity RNA methyltransferase RlmN (384 aa).

Glutamate 105 acts as the Proton acceptor in catalysis. The Radical SAM core domain occupies 111–350 (EDDRATLCVS…TIVRKTRGDD (240 aa)). An intrachain disulfide couples cysteine 118 to cysteine 355. Residues cysteine 125, cysteine 129, and cysteine 132 each coordinate [4Fe-4S] cluster. S-adenosyl-L-methionine contacts are provided by residues 179 to 180 (GE), serine 211, 233 to 235 (SLH), and asparagine 312. The active-site S-methylcysteine intermediate is the cysteine 355.

The protein belongs to the radical SAM superfamily. RlmN family. The cofactor is [4Fe-4S] cluster.

The protein localises to the cytoplasm. The enzyme catalyses adenosine(2503) in 23S rRNA + 2 reduced [2Fe-2S]-[ferredoxin] + 2 S-adenosyl-L-methionine = 2-methyladenosine(2503) in 23S rRNA + 5'-deoxyadenosine + L-methionine + 2 oxidized [2Fe-2S]-[ferredoxin] + S-adenosyl-L-homocysteine. The catalysed reaction is adenosine(37) in tRNA + 2 reduced [2Fe-2S]-[ferredoxin] + 2 S-adenosyl-L-methionine = 2-methyladenosine(37) in tRNA + 5'-deoxyadenosine + L-methionine + 2 oxidized [2Fe-2S]-[ferredoxin] + S-adenosyl-L-homocysteine. Specifically methylates position 2 of adenine 2503 in 23S rRNA and position 2 of adenine 37 in tRNAs. m2A2503 modification seems to play a crucial role in the proofreading step occurring at the peptidyl transferase center and thus would serve to optimize ribosomal fidelity. This is Dual-specificity RNA methyltransferase RlmN from Escherichia fergusonii (strain ATCC 35469 / DSM 13698 / CCUG 18766 / IAM 14443 / JCM 21226 / LMG 7866 / NBRC 102419 / NCTC 12128 / CDC 0568-73).